A 399-amino-acid polypeptide reads, in one-letter code: uncharacterized protein (399 aa).

Residues 375–399 (AAGGHRGSHGKSEQAATVRVVDDRR) are disordered.

This sequence belongs to the mycobacterial PPE family.

This is an uncharacterized protein from Mycobacterium tuberculosis (strain CDC 1551 / Oshkosh).